A 475-amino-acid chain; its full sequence is Solute carrier family 46 member 2 (475 aa).

Residues Met1–Glu23 are Cytoplasmic-facing. The chain crosses the membrane as a helical span at residues Pro24–Val44. Residues Lys45–Tyr78 are Extracellular-facing. Asn55 is a glycosylation site (N-linked (GlcNAc...) asparagine). The chain crosses the membrane as a helical span at residues Ile79 to Leu99. The Cytoplasmic segment spans residues Ser100–Ser108. The chain crosses the membrane as a helical span at residues Ile109–Leu129. Residues Asp130–Gly138 are Extracellular-facing. A helical transmembrane segment spans residues Ala139 to Leu159. Over Gly160–Arg172 the chain is Cytoplasmic. The chain crosses the membrane as a helical span at residues Leu173 to His193. The Extracellular portion of the chain corresponds to Leu194–Gly205. Residues Leu206–Val226 traverse the membrane as a helical segment. Residues Leu227 to Thr282 lie on the Cytoplasmic side of the membrane. A helical transmembrane segment spans residues Ile283–Val303. Over Ile304–Val320 the chain is Extracellular. Residues Gly321–Phe341 form a helical membrane-spanning segment. At Ser342–Asp347 the chain is on the cytoplasmic side. The chain crosses the membrane as a helical span at residues Thr348 to Val368. The Extracellular portion of the chain corresponds to Lys369–Glu370. The chain crosses the membrane as a helical span at residues Thr371 to Ile391. Residues Arg392–Lys406 are Cytoplasmic-facing. The helical transmembrane segment at Val407 to Asn427 threads the bilayer. Over Lys428–Asp435 the chain is Extracellular. The helical transmembrane segment at Met436–Ile456 threads the bilayer. Residues Ser457 to Lys475 are Cytoplasmic-facing.

Belongs to the major facilitator superfamily. SLC46A family. In terms of processing, glycosylated. As to expression, strongly expressed in the adult thymus. Expressed in spleen, lymph nodes, thymus, PBL, bone marrow and fetal liver. Expressed in monocytes and pre-dendridic cells.

It localises to the endosome membrane. The protein localises to the cell membrane. The enzyme catalyses N-acetyl-beta-D-glucosaminyl-(1-&gt;4)-1,6-anhydro-N-acetyl-beta-D-muramoyl-L-alanyl-gamma-D-glutamyl-meso-2,6-diaminopimeloyl-D-alanine(out) + n H(+)(out) = N-acetyl-beta-D-glucosaminyl-(1-&gt;4)-1,6-anhydro-N-acetyl-beta-D-muramoyl-L-alanyl-gamma-D-glutamyl-meso-2,6-diaminopimeloyl-D-alanine(in) + n H(+)(in). It catalyses the reaction L-alanyl-gamma-D-glutamyl-meso-2,6-diaminopimelate(out) + n H(+)(out) = L-alanyl-gamma-D-glutamyl-meso-2,6-diaminopimelate(in) + n H(+)(in). The catalysed reaction is N-acetyl-D-muramoyl-L-alanyl-D-isoglutamine(out) + n H(+)(out) = N-acetyl-D-muramoyl-L-alanyl-D-isoglutamine(in) + n H(+)(in). It carries out the reaction 2',3'-cGAMP(out) + n H(+)(out) = 2',3'-cGAMP(in) + n H(+)(in). The enzyme catalyses 3',3'-cGAMP(out) + n H(+)(out) = 3',3'-cGAMP(in) + n H(+)(in). In terms of biological role, proton-coupled transporter that delivers pathogen-associated or danger-associated molecular patterns to cytosolic pattern recognition receptors as part of the innate immune response to microbes or tissue injury. Has selectivity toward muropeptides that contain the amino acid diaminopimelic acid (DAP-type peptidoglycan muropeptides) including Tri-DAP and tracheal toxin (TCT), common in Gram-negative bacteria and Gram-positive bacilli. In the context of immune recognition of skin microbiota, shuttles bacterial muropeptides across the endolysosomal membranes into the cytosol for recognition by NOD1, triggering MYD88-dependent secretion of IL1A and neutrophil recruitment in a pyroptosis-type inflammatory process. To a lesser extent and redundantly, transports muramyl dipeptides derived from most bacterial proteoglycans, eliciting NOD2 receptor activation and downstream inflammatory responses. Postulated to function as a dominant importer of cyclic GMP-AMP dinucleotides (cGAMPs) in monocyte and macrophage cell lineages. Selectively imports cGAMPs derived from pathogenic bacteria such as 3'3'-cGAMP thus providing for differential immune recognition of pathogenic versus commensal bacteria. During tumorigenesis may transport extracellular tumor-derived 2'3'-cGAMP across the plasma membrane of M1-polarized macrophages to activate the anti-tumoral stimulator of interferon genes (STING) pathway. The transport mechanism, its electrogenicity and stoichiometry remain to be elucidated. The protein is Solute carrier family 46 member 2 of Homo sapiens (Human).